The primary structure comprises 356 residues: tRNA-specific 2-thiouridylase MnmA (356 aa).

ATP contacts are provided by residues 6-13 and Leu-32; that span reads AMSGGVDS. Cys-101 (nucleophile) is an active-site residue. An intrachain disulfide couples Cys-101 to Cys-193. Gly-125 provides a ligand contact to ATP. An interaction with tRNA region spans residues 143 to 145; that stretch reads KDQ. Catalysis depends on Cys-193, which acts as the Cysteine persulfide intermediate.

It belongs to the MnmA/TRMU family.

It localises to the cytoplasm. The catalysed reaction is S-sulfanyl-L-cysteinyl-[protein] + uridine(34) in tRNA + AH2 + ATP = 2-thiouridine(34) in tRNA + L-cysteinyl-[protein] + A + AMP + diphosphate + H(+). In terms of biological role, catalyzes the 2-thiolation of uridine at the wobble position (U34) of tRNA, leading to the formation of s(2)U34. This Mycobacteroides abscessus (strain ATCC 19977 / DSM 44196 / CCUG 20993 / CIP 104536 / JCM 13569 / NCTC 13031 / TMC 1543 / L948) (Mycobacterium abscessus) protein is tRNA-specific 2-thiouridylase MnmA.